We begin with the raw amino-acid sequence, 445 residues long: Acetylcholine-gated chloride channel subunit acc-2 (445 aa).

The N-terminal stretch at 1-26 is a signal peptide; the sequence is MIFTLLSTLPVLIITTELDYSELVHS. The Extracellular portion of the chain corresponds to 27 to 258; it reads AELVSSSSYI…LHVTIIFERR (232 aa). N-linked (GlcNAc...) asparagine glycosylation is found at asparagine 46, asparagine 59, asparagine 121, and asparagine 162. A disulfide bridge connects residues cysteine 177 and cysteine 191. The N-linked (GlcNAc...) asparagine glycan is linked to asparagine 218. The chain crosses the membrane as a helical span at residues 259–279; sequence FIWYFMQAYLPTYLTIFISWI. Over 280 to 286 the chain is Cytoplasmic; sequence SFSLGSR. A helical transmembrane segment spans residues 287–307; sequence AIPARTMLGVNSLLAIVFSFG. At 308-326 the chain is on the extracellular side; the sequence is NIMRNLPRVSYIKGIDVWM. A helical membrane pass occupies residues 327–347; the sequence is LVSMTFIFCSLLELAIVGFMV. Residues 348-407 are Cytoplasmic-facing; that stretch reads RDETVAKKKQQKKISGNISREESPHGIISERRFMFPPGCSESSKSLSSCTSGWTPERIDS. The chain crosses the membrane as a helical span at residues 408-428; that stretch reads ISSVMFPFSFFVFNIIYWFYY. Topologically, residues 429 to 445 are extracellular; that stretch reads IHRKEIIKQNLINRVDG.

It belongs to the ligand-gated ion channel (TC 1.A.9) family. Homopentamer (in vitro). May interact with either acc-3 or acc-4; the interactions do not result in significant heteropentameric ion channel activity. Expressed in RIA, RIG, PHA and AIZ glutamatergic neurons, URX and RIH cholinergic neurons, and in male-specific MCM neurons.

The protein localises to the cell membrane. Acetylcholine-gated chloride channel subunit. Currents in channels are triggered in response to acetylcholine. Channel properties may be modulated by the formation of homomeric and heteromeric channels. The sequence is that of Acetylcholine-gated chloride channel subunit acc-2 from Caenorhabditis elegans.